We begin with the raw amino-acid sequence, 30 residues long: uncharacterized protein (30 aa).

The first 22 residues, Met1–Ser22, serve as a signal peptide directing secretion.

This is an uncharacterized protein from Schizosaccharomyces pombe (strain 972 / ATCC 24843) (Fission yeast).